We begin with the raw amino-acid sequence, 82 residues long: Small ribosomal subunit protein uS17 (82 aa).

This sequence belongs to the universal ribosomal protein uS17 family. Part of the 30S ribosomal subunit.

Its function is as follows. One of the primary rRNA binding proteins, it binds specifically to the 5'-end of 16S ribosomal RNA. The protein is Small ribosomal subunit protein uS17 of Phenylobacterium zucineum (strain HLK1).